Reading from the N-terminus, the 133-residue chain is Large ribosomal subunit protein bL20 (133 aa).

Belongs to the bacterial ribosomal protein bL20 family.

Its function is as follows. Binds directly to 23S ribosomal RNA and is necessary for the in vitro assembly process of the 50S ribosomal subunit. It is not involved in the protein synthesizing functions of that subunit. In Bartonella tribocorum (strain CIP 105476 / IBS 506), this protein is Large ribosomal subunit protein bL20.